The sequence spans 177 residues: ATP synthase subunit delta (177 aa).

The protein belongs to the ATPase delta chain family. As to quaternary structure, F-type ATPases have 2 components, F(1) - the catalytic core - and F(0) - the membrane proton channel. F(1) has five subunits: alpha(3), beta(3), gamma(1), delta(1), epsilon(1). F(0) has three main subunits: a(1), b(2) and c(10-14). The alpha and beta chains form an alternating ring which encloses part of the gamma chain. F(1) is attached to F(0) by a central stalk formed by the gamma and epsilon chains, while a peripheral stalk is formed by the delta and b chains.

The protein resides in the cell membrane. F(1)F(0) ATP synthase produces ATP from ADP in the presence of a proton or sodium gradient. F-type ATPases consist of two structural domains, F(1) containing the extramembraneous catalytic core and F(0) containing the membrane proton channel, linked together by a central stalk and a peripheral stalk. During catalysis, ATP synthesis in the catalytic domain of F(1) is coupled via a rotary mechanism of the central stalk subunits to proton translocation. In terms of biological role, this protein is part of the stalk that links CF(0) to CF(1). It either transmits conformational changes from CF(0) to CF(1) or is implicated in proton conduction. This Carboxydothermus hydrogenoformans (strain ATCC BAA-161 / DSM 6008 / Z-2901) protein is ATP synthase subunit delta.